Consider the following 631-residue polypeptide: 1-deoxy-D-xylulose-5-phosphate synthase (631 aa).

Residues histidine 73 and 114 to 116 (GHS) each bind thiamine diphosphate. Residue aspartate 145 participates in Mg(2+) binding. Residues 146-147 (GA), asparagine 174, tyrosine 285, and glutamate 366 each bind thiamine diphosphate. A Mg(2+)-binding site is contributed by asparagine 174.

Belongs to the transketolase family. DXPS subfamily. Homodimer. It depends on Mg(2+) as a cofactor. Requires thiamine diphosphate as cofactor.

The catalysed reaction is D-glyceraldehyde 3-phosphate + pyruvate + H(+) = 1-deoxy-D-xylulose 5-phosphate + CO2. It participates in metabolic intermediate biosynthesis; 1-deoxy-D-xylulose 5-phosphate biosynthesis; 1-deoxy-D-xylulose 5-phosphate from D-glyceraldehyde 3-phosphate and pyruvate: step 1/1. Its function is as follows. Catalyzes the acyloin condensation reaction between C atoms 2 and 3 of pyruvate and glyceraldehyde 3-phosphate to yield 1-deoxy-D-xylulose-5-phosphate (DXP). This Desulfitobacterium hafniense (strain DSM 10664 / DCB-2) protein is 1-deoxy-D-xylulose-5-phosphate synthase.